The sequence spans 99 residues: DNA-directed RNA polymerase subunit omega (99 aa).

Positions 1–10 (MSSTSAASAA) are enriched in low complexity. The segment at 1–20 (MSSTSAASAAGQGALPAYDT) is disordered.

Belongs to the RNA polymerase subunit omega family. The RNAP catalytic core consists of 2 alpha, 1 beta, 1 beta' and 1 omega subunit. When a sigma factor is associated with the core the holoenzyme is formed, which can initiate transcription.

The enzyme catalyses RNA(n) + a ribonucleoside 5'-triphosphate = RNA(n+1) + diphosphate. Its function is as follows. Promotes RNA polymerase assembly. Latches the N- and C-terminal regions of the beta' subunit thereby facilitating its interaction with the beta and alpha subunits. This chain is DNA-directed RNA polymerase subunit omega, found in Rhodococcus erythropolis (strain PR4 / NBRC 100887).